A 212-amino-acid chain; its full sequence is Peptide methionine sulfoxide reductase MsrA (212 aa).

Residue Cys52 is part of the active site.

This sequence belongs to the MsrA Met sulfoxide reductase family.

The enzyme catalyses L-methionyl-[protein] + [thioredoxin]-disulfide + H2O = L-methionyl-(S)-S-oxide-[protein] + [thioredoxin]-dithiol. It carries out the reaction [thioredoxin]-disulfide + L-methionine + H2O = L-methionine (S)-S-oxide + [thioredoxin]-dithiol. Has an important function as a repair enzyme for proteins that have been inactivated by oxidation. Catalyzes the reversible oxidation-reduction of methionine sulfoxide in proteins to methionine. The sequence is that of Peptide methionine sulfoxide reductase MsrA from Escherichia coli (strain ATCC 8739 / DSM 1576 / NBRC 3972 / NCIMB 8545 / WDCM 00012 / Crooks).